The sequence spans 79 residues: RNA-binding protein Hfq (79 aa).

The region spanning 10 to 70 is the Sm domain; that stretch reads DVFLKTVRKQ…ISTIMPGQPI (61 aa).

Belongs to the Hfq family. In terms of assembly, homohexamer.

RNA chaperone that binds small regulatory RNA (sRNAs) and mRNAs to facilitate mRNA translational regulation in response to envelope stress, environmental stress and changes in metabolite concentrations. Also binds with high specificity to tRNAs. The protein is RNA-binding protein Hfq of Bartonella bacilliformis (strain ATCC 35685 / KC583 / Herrer 020/F12,63).